We begin with the raw amino-acid sequence, 185 residues long: Translation initiation factor IF-3 (185 aa).

This sequence belongs to the IF-3 family. In terms of assembly, monomer.

The protein localises to the cytoplasm. Its function is as follows. IF-3 binds to the 30S ribosomal subunit and shifts the equilibrium between 70S ribosomes and their 50S and 30S subunits in favor of the free subunits, thus enhancing the availability of 30S subunits on which protein synthesis initiation begins. The protein is Translation initiation factor IF-3 of Rickettsia felis (strain ATCC VR-1525 / URRWXCal2) (Rickettsia azadi).